A 282-amino-acid polypeptide reads, in one-letter code: Pantothenate synthetase (282 aa).

ATP is bound at residue 33 to 40 (MGALHAGH). H40 acts as the Proton donor in catalysis. A (R)-pantoate-binding site is contributed by Q64. Position 64 (Q64) interacts with beta-alanine. 150 to 153 (GEKD) is a binding site for ATP. Residue Q156 coordinates (R)-pantoate. ATP is bound by residues V179 and 187-190 (LSSR).

It belongs to the pantothenate synthetase family. As to quaternary structure, homodimer.

The protein localises to the cytoplasm. The enzyme catalyses (R)-pantoate + beta-alanine + ATP = (R)-pantothenate + AMP + diphosphate + H(+). It functions in the pathway cofactor biosynthesis; (R)-pantothenate biosynthesis; (R)-pantothenate from (R)-pantoate and beta-alanine: step 1/1. In terms of biological role, catalyzes the condensation of pantoate with beta-alanine in an ATP-dependent reaction via a pantoyl-adenylate intermediate. The protein is Pantothenate synthetase of Rhodospirillum rubrum (strain ATCC 11170 / ATH 1.1.1 / DSM 467 / LMG 4362 / NCIMB 8255 / S1).